Consider the following 327-residue polypeptide: Clavesin-2 (327 aa).

The CRAL-TRIO domain occupies 96–257 (IKQALKDGFP…EFGGMLPPYD (162 aa)). Positions 289–327 (DKELSPKSMKRSQSVVDPTALKRMDKSEEENMQPLLALD) are disordered.

In terms of assembly, forms a complex with clathrin heavy chain and gamma-adaptin.

It localises to the golgi apparatus. The protein resides in the trans-Golgi network membrane. Its subcellular location is the early endosome membrane. The protein localises to the cytoplasmic vesicle. It is found in the clathrin-coated vesicle. Functionally, required for normal morphology of late endosomes and/or lysosomes in neurons. Binds phosphatidylinositol 3,5-bisphosphate (PtdIns(3,5)P2). The sequence is that of Clavesin-2 (Clvs2) from Mus musculus (Mouse).